A 158-amino-acid chain; its full sequence is MQCPSCQNTDSRVLESRAADAGRSVRRRRECLHCDFRFTTYERVETVPITVLKRNGNRETFNRSKILNGLTMACQKTGLEQDRLESMVNELELQLQQRSGREVNSAEIGEMVLDQLSEMSEVAYVRFASVYRHFRGINDFVAALEGIHANKEQLAAVR.

The segment at 3-34 is a zinc-finger region; that stretch reads CPSCQNTDSRVLESRAADAGRSVRRRRECLHC. In terms of domain architecture, ATP-cone spans 49–139; that stretch reads ITVLKRNGNR…VYRHFRGIND (91 aa).

It belongs to the NrdR family. It depends on Zn(2+) as a cofactor.

Negatively regulates transcription of bacterial ribonucleotide reductase nrd genes and operons by binding to NrdR-boxes. The sequence is that of Transcriptional repressor NrdR from Prochlorococcus marinus (strain MIT 9303).